Consider the following 2564-residue polypeptide: MAPNMTAPEPIAIIGMSCRFPGGASEPSRLWDTLSEGKSAWSEVPEDRFNMKAFYQRGDPHASTTNTAGGHFLDEDLSKFDSNFFGVKPLEARAWDPQQRLTLELAYEAFENAGLTIPQLWGSNTGVYVGQWSSDYSEILARDPEYQELYHTLGAGPAITSNRVSFFFNLRGPSFTVDTGCSSSLVALHNAVQSLRNGESTMSLVGGVNVLLDPQRFTYQSKLKMFSPDGRSFSFDHRANGYGRGEGCGCVVLKPLSLAVKDGDRIRAVIRNSALNQDGRTPQGISVPSMVAQEELIRRAYAEVGLVPTETDYVEAHGTGTAVGDPIEAQAIAAVLAQTRKPGQEPLSLASVKGNIGHTESAAGIAGLIKSVLMLENQAIPPQVNYEKPNPKIPLDKWNLQIPIRFEEKQLRRISVNSFGYGGTNAHVIVDRVDEHNHSNGTNGTNGTHHHNGTNGSNGNGTNGTNGTNGTDGFHDTESISDSISDRPRVFVLSGAEEQSCHQNAERLAQYLTKLPASLLEDSDGFLDKLAVSVNKRTVHDYSASVIAYDGEDLLAQLDVLQQTPVAIRAPVKGGARVGYVFGGQGAQYYSMGREMIKSWTPFRQSLDRANAHLKTMGCQWDLLTELSHEKAQDSHVDEPEYGQTLSTAVQLALVDTLVATKMRPTSVVGHSSGEIAAAYAAGALSFEDALTVAYHRGRLTSQLISTGISGGMLAVGSSPDAVQDYIEQVKATTKANVKIACYNSPTSVTLSGDSEAINAISELLQDDDVFNRKLKTQGAAYHSQMMQAMEEEYRSAIAYIQPRPVDAPVTMMSSLLGKKLPAGFLLDGDYWARNLVSPVLFAGALRGIMVGDEHDGSSQHSPQVDLLLEIGPHATMQGAVKETLKGLGSSVRIQYLSCLKRKTSAAENMLRTLADLFALGASVDLHYANAGFRTKLPPILKDLPPYAFNHDQRLWHDGRISHEFTHRQFLPHELLGNLSADVNHTEPRWRRFLRLKELPWLQHHIVQGQVIFPAAGYLAMAMEAMRRFTAFETENQSKATAGYSFRNTSFSKALVLREDDADTEICLSLRPEARSARNSWQDWKEFRVFSISPGKGWSEHCRGRIRAVVDQGILAEALKDTTGVKDRIAASVPHHITSNRLYATARQVGMEWYGPFDNVVNLQARTDLSVATNRMPTLLSSAHPFGLSTYVVHPGMLDSTLFHGLVASVLVEQEVKAPVVPTFLEQLTISTAIQVPEGEELRTYSVSREEGSCWSAQVELNGESVISFHGLRTAQLPSDVVNTRPHQLAHSPEWVCHYPSMTREQLIDTCINSVPAGSARQRNIVLYADVRAHVERALSHVQPDQVASGHEQSWYNWMKSFLATEPDSSDVVSEAREATKSEKFVGFDAVKIIGENLEQLLTGEVTSLSLLSTNDMLERLYSEERNQRCYTQISAYCKAVGLYNPALKVLEVGGGTASATLPFLQALSHQGHPLVAQYDFTDLSTAFFAAARERLGQYGHNVNYEAFDLAQDPETQGFEPGSYDIIVACNVVHATPSIASSLEHIRQLLRPGGTLVLMEITNGDPFYQLIFGSLSGWWSGVSEGRESTAILSEYDWKNVLAEQGYQSDPIMVGDYATSEGGTISVIFAKTPLESRRDHLSETSLHFATDLFADSSAGYLDNVAEHLGQKSELSLRQITTGNLESIKDIDSTVVVIDPETIEALAGRMDASLWEKFQKCALSCKGLLLVSRGATGSSVVPEGALAVGFARSMRLEQHGIRYITLDLDPSVDRDANELSRVLAQLLTSETFDFDRTISDADYEFAERKGQLHVNRLFPNVKLEESVAHSTRRSKPEQTEFLDTSRPLKVELGVDGLLETFRWVDDHQHARSLAPDEVRIECRAASINFRDVLIATGGLGGAGTMMNDCAGTVVEVGSNMASRYSVGDRVCSYYAQSYNNYPIVDGQHCAKIPDNVSFALGASLPIVWATTYHSLVNVAKLKAGESILIHAAAGAVGQAAVILAQHLGAVVYATCGSQEKRERLESMGVNPSHIFTSRSPAFGPALRAATNNKGVNVILNSLAGELFRESLECLTSFGRFIEIGKKDFLDDALMPTKFLLQNITFACVDLVQMINEDKPLVHGLLNDVVELVASGQLKDEVNLQLYKLGEIESAFRLISAGKHMGKVILTVDQGETVLALPATPNIPKLLPDATYLLVGGFGGLGVRLIRWLASRGAKTIVTMSRSGAKSPAAKTCIEEMDSLGVRIIAKSCDISSKEALQVVVKELEDVDGLAPVRGVINAAMALEDAMFDQMTHQQWVSSLAPKVAGTRNLDEVLPNYMDFFVVLSSIAGIIGHQAQANYAAACTFQDAFMHYRRSQGRASFAIDVGVVSDAGFVSEAPAVFSNMKRQGFSFISVAELLATLDYALSNDGPDCQASIGVMAEASPNNAEWLEQRRISHLVKDSANGAAGLNEGSGSDADHIGHIRSAKTAEEALDAVGQAVLAELSKLTVTPVDRILPHRTLDSYGVDSLVAVELRNWVVAIVAADLSLLLIRESRSIEELIHLVAGKSRLVPAKLQDAVSKLA.

The 425-residue stretch at 8–432 folds into the Ketosynthase family 3 (KS3) domain; sequence PEPIAIIGMS…GTNAHVIVDR (425 aa). Residues C181, H317, and H358 each act as for beta-ketoacyl synthase activity in the active site. A disordered region spans residues 435–482; sequence EHNHSNGTNGTNGTHHHNGTNGSNGNGTNGTNGTNGTDGFHDTESISD. Residues 439 to 455 show a composition bias toward low complexity; it reads SNGTNGTNGTHHHNGTN. The span at 473–482 shows a compositional bias: basic and acidic residues; that stretch reads GFHDTESISD. Residues 580–914 are malonyl-CoA:ACP transacylase (MAT) domain; sequence YVFGGQGAQY…SAAENMLRTL (335 aa). Residues 973–1113 are N-terminal hotdog fold; that stretch reads HELLGNLSAD…GRIRAVVDQG (141 aa). Positions 973–1280 are dehydratase (DH) domain; that stretch reads HELLGNLSAD…GLRTAQLPSD (308 aa). A PKS/mFAS DH domain is found at 973–1283; that stretch reads HELLGNLSAD…TAQLPSDVVN (311 aa). H1005 functions as the Proton acceptor; for dehydratase activity in the catalytic mechanism. Positions 1130–1283 are C-terminal hotdog fold; that stretch reads AASVPHHITS…TAQLPSDVVN (154 aa). D1199 acts as the Proton donor; for dehydratase activity in catalysis. Residues 1451 to 1556 form a methyltransferase (CMet) domain region; that stretch reads LEVGGGTASA…RQLLRPGGTL (106 aa). Residues 1854–2167 form an enoyl reductase (ER) domain region; the sequence is GLLETFRWVD…AGKHMGKVIL (314 aa). The ketoreductase (KR) domain stretch occupies residues 2191-2370; that stretch reads ATYLLVGGFG…SFAIDVGVVS (180 aa). The Carrier domain maps to 2472-2549; that stretch reads EALDAVGQAV…ELIHLVAGKS (78 aa). At S2509 the chain carries O-(pantetheine 4'-phosphoryl)serine.

Its pathway is secondary metabolite biosynthesis. Highly reducing polyketide synthase; part of the gene cluster that mediates the biosynthesis of the lipopeptides W493 A and B. W493 A and B consist of six amino acid residues D-allo-thr, L-Ala, D-Ala, L-Gln, D-Tyr, and L-Val/L-Ile linked to a 3-hydroxy-4-methyltetradecanoic acid polyketide chain. The biosynthesis starts with formation of the linear polyketide chain by the highly reducing polyketide synthase PKS40. The gene cluster contains a putative acyl-CoA ligase (FPSE_09184) for formation of a CoA thioester polyketide. The thiol bond could be hydrolyzed by the putative thioesterase (FPSE_09186) and then accepted by the first T domain in module 1 of NRPS32. The second T domain is responsible for accepting a threonine, which is adenylated by the A domain and epimerized to the D-allo-threonine formed by the E domain. The five successive modules incorporate Ala, Ala, Gln, Tyr, and Val/Ile into the final product, which is released by cyclization. This chain is Highly reducing polyketide synthase 40, found in Fusarium pseudograminearum (strain CS3096) (Wheat and barley crown-rot fungus).